Consider the following 427-residue polypeptide: Tyrosine--tRNA ligase (427 aa).

An L-tyrosine-binding site is contributed by Tyr-33. The short motif at 38-47 (PTASSLTIGN) is the 'HIGH' region element. 2 residues coordinate L-tyrosine: Tyr-168 and Gln-172. Positions 228 to 232 (KFGKS) match the 'KMSKS' region motif. An ATP-binding site is contributed by Lys-231. The S4 RNA-binding domain occupies 361–427 (LDLLSTLTNS…KKNYYLLRFN (67 aa)).

It belongs to the class-I aminoacyl-tRNA synthetase family. TyrS type 1 subfamily. As to quaternary structure, homodimer.

It localises to the cytoplasm. It carries out the reaction tRNA(Tyr) + L-tyrosine + ATP = L-tyrosyl-tRNA(Tyr) + AMP + diphosphate + H(+). Its function is as follows. Catalyzes the attachment of tyrosine to tRNA(Tyr) in a two-step reaction: tyrosine is first activated by ATP to form Tyr-AMP and then transferred to the acceptor end of tRNA(Tyr). In Cytophaga hutchinsonii (strain ATCC 33406 / DSM 1761 / CIP 103989 / NBRC 15051 / NCIMB 9469 / D465), this protein is Tyrosine--tRNA ligase.